A 655-amino-acid polypeptide reads, in one-letter code: NAD(P)H-quinone oxidoreductase subunit 5, chloroplastic (655 aa).

16 helical membrane passes run 7-27 (YAWLIPILPFLGSMIIGLGLI), 40-60 (FAFFNIVLLGIALIFSISILI), 89-109 (IDPLTSVMLVLVTSVAILVMI), 124-144 (FFAYLSLFTASMLGLVLSPNL), 147-167 (IYVFWELVGMCSYLLIGFWFT), 185-205 (GDFGLFLGILGLYWVTGSFEF), 226-246 (HPVQVELLVLFNLLVFLGPMA), 265-285 (TPISALIHAATMVAAGVFLVA), 296-316 (IVMGFIAWIGAITAIIAAIIA), 334-354 (LGYMIMAMGVGSYTAGLFHLI), 361-381 (ALLFLGSGSVIHGMEPVVGFN), 402-422 (AITFLLGTLSLCGIPPMACFW), 434-454 (AQPILWIIAWVTAGLTSFYMF), 488-508 (ILIPLIILALVTTLVGFVGTP), 533-553 (LSMSGSSVGIALIGLTLASLI), and 635-655 (QSYVFVIIFATLIFVLASQGF).

Belongs to the complex I subunit 5 family. As to quaternary structure, NDH is composed of at least 16 different subunits, 5 of which are encoded in the nucleus.

Its subcellular location is the plastid. It is found in the chloroplast thylakoid membrane. It carries out the reaction a plastoquinone + NADH + (n+1) H(+)(in) = a plastoquinol + NAD(+) + n H(+)(out). It catalyses the reaction a plastoquinone + NADPH + (n+1) H(+)(in) = a plastoquinol + NADP(+) + n H(+)(out). Its function is as follows. NDH shuttles electrons from NAD(P)H:plastoquinone, via FMN and iron-sulfur (Fe-S) centers, to quinones in the photosynthetic chain and possibly in a chloroplast respiratory chain. The immediate electron acceptor for the enzyme in this species is believed to be plastoquinone. Couples the redox reaction to proton translocation, and thus conserves the redox energy in a proton gradient. The protein is NAD(P)H-quinone oxidoreductase subunit 5, chloroplastic (ndhF) of Chlorokybus atmophyticus (Soil alga).